Here is a 549-residue protein sequence, read N- to C-terminus: SH3 domain-containing protein 21 (549 aa).

Residues 1–56 (MVQSELQLQPRAGRRADASNWGDFGSDKGGLGNTDIPPITPNSQRPPKLSNLTYDS) are disordered. The span at 41–54 (PNSQRPPKLSNLTY) shows a compositional bias: polar residues. The SH3 domain occupies 65–126 (SCPETCRVLF…PDNFVIPPPP (62 aa)). Disordered regions lie at residues 142–303 (PIKE…KPAK) and 332–479 (FKKE…KSKN). Low complexity predominate over residues 211 to 220 (QASQQHSASS). 2 stretches are compositionally biased toward basic and acidic residues: residues 267-280 (PVPK…KIPA) and 332-342 (FKKEPSRDNDQ). Composition is skewed to polar residues over residues 343–365 (CQHL…NNIQ) and 439–456 (VLPQ…TIQQ). Residues 482 to 510 (MDVLESLKEEVGLLRSRLELLELKLEQKM) are a coiled coil. Positions 528–549 (QMMQRNRKSFKHAETQTETQTE) are disordered.

The sequence is that of SH3 domain-containing protein 21 (Sh3d21) from Mus musculus (Mouse).